We begin with the raw amino-acid sequence, 91 residues long: Dynein 8 kDa light chain, flagellar outer arm (91 aa).

Belongs to the dynein light chain family. As to quaternary structure, consists of at least 3 heavy chains (alpha, beta and gamma), 2 intermediate chains and 8 light chains.

The protein localises to the cytoplasm. It localises to the cytoskeleton. The protein resides in the flagellum axoneme. The polypeptide is Dynein 8 kDa light chain, flagellar outer arm (Chlamydomonas reinhardtii (Chlamydomonas smithii)).